Consider the following 122-residue polypeptide: MIQPQTHLNVADNSGARELMCIRIIGASNRRYAHIGDVIVAVIKDAVPNMPLERSEVVRAVIVRTCKELKRDNGMIIRYDDNAAVVIDQEGNPKGTRVFGAIARELRQFNFTKIVSLAPEVL.

The protein belongs to the universal ribosomal protein uL14 family. Part of the 50S ribosomal subunit.

It localises to the plastid. The protein localises to the chloroplast. In terms of biological role, binds to 23S rRNA. The sequence is that of Large ribosomal subunit protein uL14c from Lactuca sativa (Garden lettuce).